A 124-amino-acid chain; its full sequence is Fluoride-specific ion channel FluC 2 (124 aa).

4 helical membrane-spanning segments follow: residues 1-21 (MNFLLAGIGASIGAMLRYAIT), 36-58 (SNLPTPTLFINLTGAFILGFIFG), 63-85 (VFIYAIVGTGVLGGYTTFSTMNT), and 104-124 (LSSYLGGLILVFVGYYLAILF). The Na(+) site is built by glycine 75 and threonine 78.

Belongs to the fluoride channel Fluc/FEX (TC 1.A.43) family. In terms of assembly, heterodimer composed of FluC1 and FluC2. Neither FluC1 nor FluC2 alone catalyzes fluoride efflux from liposomes.

Its subcellular location is the cell membrane. It catalyses the reaction fluoride(in) = fluoride(out). Its activity is regulated as follows. Na(+) is not transported, but it plays an essential structural role and its presence is essential for fluoride channel function. Functionally, fluoride-specific ion channel. Important for reducing fluoride concentration in the cell, thus reducing its toxicity. The protein is Fluoride-specific ion channel FluC 2 of Lactobacillus acidophilus (strain ATCC 700396 / NCK56 / N2 / NCFM).